The following is a 386-amino-acid chain: Acetylornithine aminotransferase (386 aa).

Pyridoxal 5'-phosphate contacts are provided by residues 96–97 (GA) and Phe123. Residue Arg126 coordinates N(2)-acetyl-L-ornithine. Pyridoxal 5'-phosphate is bound at residue 208–211 (DEVQ). An N6-(pyridoxal phosphate)lysine modification is found at Lys237. A N(2)-acetyl-L-ornithine-binding site is contributed by Ser265. Thr266 is a binding site for pyridoxal 5'-phosphate.

Belongs to the class-III pyridoxal-phosphate-dependent aminotransferase family. ArgD subfamily. As to quaternary structure, homodimer. Requires pyridoxal 5'-phosphate as cofactor.

The protein localises to the cytoplasm. It carries out the reaction N(2)-acetyl-L-ornithine + 2-oxoglutarate = N-acetyl-L-glutamate 5-semialdehyde + L-glutamate. The protein operates within amino-acid biosynthesis; L-arginine biosynthesis; N(2)-acetyl-L-ornithine from L-glutamate: step 4/4. The polypeptide is Acetylornithine aminotransferase (Bacillus anthracis).